A 591-amino-acid chain; its full sequence is Dolichyl-phosphooligosaccharide-protein glycotransferase 1 (591 aa).

The Cytoplasmic segment spans residues 1–5 (MDRKV). The chain crosses the membrane as a helical span at residues 6–26 (LMLAVILFALAVRFQNFGEIF). At 27 to 67 (DSGIYYTGYDSYYHMRLVEVMVKESFRPDYDYYINYPFGLK) the chain is on the extracellular side. The short motif at 34–36 (GYD) is the DXD motif 1 element. Asp-36 is a Mn(2+) binding site. A helical transmembrane segment spans residues 68-88 (ITWPPLFDYILAFPGMLFGFH). The Cytoplasmic portion of the chain corresponds to 89–91 (SSE). The chain crosses the membrane as a helical span at residues 92–112 (IFAVFLPVILGVLSVVLICLT). Residues 113–121 (ALQIVNNQT) are Extracellular-facing. A helical transmembrane segment spans residues 122-142 (FALISAFIYAAAPVAVWKTVL). The Cytoplasmic portion of the chain corresponds to 143-147 (GQADH). Position 146 (Asp-146) interacts with Mn(2+). The DXD motif 2 signature appears at 146-148 (DHH). Residue His-147 participates in a glycophospholipid binding. His-148 lines the Mn(2+) pocket. A helical transmembrane segment spans residues 148–168 (HALVIFLFLLSAYLLLKDGVW). Lys-169 is a topological domain (extracellular). A helical transmembrane segment spans residues 170 to 190 (ILAGLPMLFMALAWLGSPIYG). The Cytoplasmic segment spans residues 191–219 (ALLAFSALVHFDRKALRLVAASYLIPAIS). A helical membrane pass occupies residues 220 to 240 (FVLYPPVGISFFGLAAFLFVG). The Extracellular portion of the chain corresponds to 241 to 252 (SVVKGYEDRFRN). Residues 253–273 (ATIYYIALSLATVLIIYFIPL) traverse the membrane as a helical segment. The Cytoplasmic portion of the chain corresponds to 274–275 (PH). The helical transmembrane segment at 276–296 (FEFVKGGINYIFGANIYLPTI) threads the bilayer. A TIXE motif motif is present at residues 295–298 (TISE). Over 297–303 (SEARSLQ) the chain is Extracellular. A helical membrane pass occupies residues 304 to 324 (IFEIISASGYIYFIFALISVL). At 325 to 327 (FFR) the chain is on the cytoplasmic side. Residues 328–344 (NRFVLSMFFLSFILALM) traverse the membrane as a helical segment. Topologically, residues 345-347 (QLR) are extracellular. Arg-347 contacts a glycophospholipid. Residues 348–368 (FTEVLVVPSALLSAYLVSLVL) form a helical membrane-spanning segment. At 369–408 (ERLEYPVFEKADEEEKSRRRKRKDRKVKQKNAEVEWKDHA) the chain is on the cytoplasmic side. Residues 409–429 (VVAAFLVILAIPCIVVAVVPF) traverse the membrane as a helical segment. Residues 430 to 591 (DLTEDWKEAL…DVKIFEVVGS (162 aa)) are Extracellular-facing. The interacts with target acceptor peptide in protein substrate stretch occupies residues 465-467 (WWD). A WWDYG motif motif is present at residues 465–469 (WWDYG). Positions 521 to 535 (EITMKDANNTKFPAI) match the DKi motif motif.

This sequence belongs to the STT3 family. It depends on Mn(2+) as a cofactor. Requires Mg(2+) as cofactor. Zn(2+) is required as a cofactor.

It localises to the cell membrane. The enzyme catalyses an archaeal dolichyl phosphooligosaccharide + [protein]-L-asparagine = an archaeal dolichyl phosphate + a glycoprotein with the oligosaccharide chain attached by N-beta-D-glycosyl linkage to a protein L-asparagine.. Its pathway is protein modification; protein glycosylation. In terms of biological role, oligosaccharyl transferase (OST) that catalyzes the initial transfer of a defined glycan (a GalNAc-linked heptasaccharide composed of 4 Hex, 3 dHex and a sulfate for A.fulgidus AglB-S) from the lipid carrier dolichol-monophosphate to an asparagine residue within an Asn-X-Ser/Thr consensus motif in nascent polypeptide chains, the first step in protein N-glycosylation. In Archaeoglobus fulgidus (strain ATCC 49558 / DSM 4304 / JCM 9628 / NBRC 100126 / VC-16), this protein is Dolichyl-phosphooligosaccharide-protein glycotransferase 1 (aglB1).